A 289-amino-acid polypeptide reads, in one-letter code: Undecaprenyl-diphosphatase (289 aa).

8 helical membrane-spanning segments follow: residues 23–43 (LFLG…TAHL), 56–76 (GVAV…AYFW), 104–124 (SAIV…KLFW), 135–155 (IPAI…AENV), 165–185 (LSFW…IPGV), 210–230 (FLLG…QAFG), 235–255 (VDVF…WIAI), and 269–289 (IFIT…YLAF).

Belongs to the UppP family.

It is found in the cell inner membrane. It catalyses the reaction di-trans,octa-cis-undecaprenyl diphosphate + H2O = di-trans,octa-cis-undecaprenyl phosphate + phosphate + H(+). Its function is as follows. Catalyzes the dephosphorylation of undecaprenyl diphosphate (UPP). Confers resistance to bacitracin. The chain is Undecaprenyl-diphosphatase from Prochlorococcus marinus (strain SARG / CCMP1375 / SS120).